The primary structure comprises 551 residues: Glucans biosynthesis protein D (551 aa).

The tat-type signal signal peptide spans 1-32 (MNRRRFIKASLALAAACGTPGLATLFSRNAWA).

This sequence belongs to the OpgD/OpgG family. Post-translationally, predicted to be exported by the Tat system. The position of the signal peptide cleavage has not been experimentally proven.

It localises to the periplasm. It participates in glycan metabolism; osmoregulated periplasmic glucan (OPG) biosynthesis. Probably involved in the control of the structural glucose backbone of osmoregulated periplasmic glucans (OPGs). The sequence is that of Glucans biosynthesis protein D from Cronobacter sakazakii (strain ATCC BAA-894) (Enterobacter sakazakii).